We begin with the raw amino-acid sequence, 441 residues long: POC1 centriolar protein homolog A (441 aa).

7 WD repeats span residues 16–55 (GHRD…RAYR), 58–97 (GHKD…ESTA), 100–139 (AHTG…FLFS), 142–181 (QHIN…CIQS), 184–223 (EHGG…LIQH), 226–265 (VHSG…LLYT), and 268–307 (GHQG…GSYP). The tract at residues 347-376 (DLEPHITEMSVKDRSSPLSYTSRSVDQHHP) is disordered. Residues 348–361 (LEPHITEMSVKDRS) are compositionally biased toward basic and acidic residues. Residues 400–427 (LTRTVGILEQRLSLTEDKLKECIEQQQA) adopt a coiled-coil conformation.

Belongs to the WD repeat POC1 family. In terms of assembly, interacts with pat.

It localises to the cytoplasm. Its subcellular location is the cytoskeleton. Functionally, may play an important role in centriole assembly and/or stability and ciliogenesis. This chain is POC1 centriolar protein homolog A (poc1a), found in Xenopus laevis (African clawed frog).